The sequence spans 197 residues: Imidazoleglycerol-phosphate dehydratase (197 aa).

It belongs to the imidazoleglycerol-phosphate dehydratase family.

It is found in the cytoplasm. The catalysed reaction is D-erythro-1-(imidazol-4-yl)glycerol 3-phosphate = 3-(imidazol-4-yl)-2-oxopropyl phosphate + H2O. The protein operates within amino-acid biosynthesis; L-histidine biosynthesis; L-histidine from 5-phospho-alpha-D-ribose 1-diphosphate: step 6/9. This Pseudomonas putida (strain W619) protein is Imidazoleglycerol-phosphate dehydratase.